Consider the following 405-residue polypeptide: Indoleamine 2,3-dioxygenase 2 (405 aa).

H347 contacts heme.

This sequence belongs to the indoleamine 2,3-dioxygenase family. Requires heme as cofactor. Expressed mainly in antigen-presenting immune cells, liver, kidney, brain, and placenta. Highly expressed in kidney, followed by epididymis and liver (at protein level). Detected in the tails of the spermatozoa in the testis and in the kidney tubules (at protein level). Constitutively expressed in brain.

It catalyses the reaction L-tryptophan + O2 = N-formyl-L-kynurenine. It participates in amino-acid degradation; L-tryptophan degradation via kynurenine pathway; L-kynurenine from L-tryptophan: step 1/2. Its activity is regulated as follows. Activity is inhibited by D-1MT (1-methyl-D-tryptophan) and MTH-trp (methylthiohydantoin-DL-tryptophan) but not L-1MT (1-methyl-L-tryptophan). In terms of biological role, catalyzes the first and rate-limiting step in the kynurenine pathway of tryptophan catabolism. Involved in immune regulation. The polypeptide is Indoleamine 2,3-dioxygenase 2 (Mus musculus (Mouse)).